A 331-amino-acid chain; its full sequence is 6-phosphogluconolactonase (331 aa).

Lysine 287 is modified (N6-acetyllysine).

This sequence belongs to the cycloisomerase 2 family.

It catalyses the reaction 6-phospho-D-glucono-1,5-lactone + H2O = 6-phospho-D-gluconate + H(+). It functions in the pathway carbohydrate degradation; pentose phosphate pathway; D-ribulose 5-phosphate from D-glucose 6-phosphate (oxidative stage): step 2/3. Functionally, catalyzes the hydrolysis of 6-phosphogluconolactone to 6-phosphogluconate. This chain is 6-phosphogluconolactonase, found in Escherichia fergusonii (strain ATCC 35469 / DSM 13698 / CCUG 18766 / IAM 14443 / JCM 21226 / LMG 7866 / NBRC 102419 / NCTC 12128 / CDC 0568-73).